The primary structure comprises 282 residues: Undecaprenyl-diphosphatase (282 aa).

8 consecutive transmembrane segments (helical) span residues methionine 1 to isoleucine 21, glycine 40 to alanine 60, tryptophan 89 to isoleucine 109, valine 112 to valine 132, leucine 153 to serine 173, phenylalanine 196 to threonine 216, leucine 228 to leucine 248, and glycine 258 to glycine 278.

It belongs to the UppP family.

The protein localises to the cell inner membrane. The enzyme catalyses di-trans,octa-cis-undecaprenyl diphosphate + H2O = di-trans,octa-cis-undecaprenyl phosphate + phosphate + H(+). In terms of biological role, catalyzes the dephosphorylation of undecaprenyl diphosphate (UPP). Confers resistance to bacitracin. This is Undecaprenyl-diphosphatase from Chlorobaculum tepidum (strain ATCC 49652 / DSM 12025 / NBRC 103806 / TLS) (Chlorobium tepidum).